A 397-amino-acid chain; its full sequence is Phosphoglycerate kinase (397 aa).

Substrate is bound by residues 21-23 (DFN), Arg37, 60-63 (HLGR), Arg119, and Arg152. ATP is bound by residues Lys203, Gly294, Glu325, and 354–357 (GGDS).

It belongs to the phosphoglycerate kinase family. Monomer.

It is found in the cytoplasm. The enzyme catalyses (2R)-3-phosphoglycerate + ATP = (2R)-3-phospho-glyceroyl phosphate + ADP. Its pathway is carbohydrate degradation; glycolysis; pyruvate from D-glyceraldehyde 3-phosphate: step 2/5. This chain is Phosphoglycerate kinase, found in Prosthecochloris aestuarii (strain DSM 271 / SK 413).